The following is a 341-amino-acid chain: Phenazine O-methyltransferase PhzM (341 aa).

S-adenosyl-L-methionine contacts are provided by residues Asp205 and 231 to 233 (GDF). Residue His251 is the Proton acceptor of the active site.

It belongs to the class I-like SAM-binding methyltransferase superfamily. Cation-independent O-methyltransferase family. Homodimer.

The catalysed reaction is 1,6-dihydroxyphenazine + S-adenosyl-L-methionine = 1-hydroxy-6-methoxyphenazine + S-adenosyl-L-homocysteine + H(+). It carries out the reaction 1-hydroxy-6-methoxyphenazine + S-adenosyl-L-methionine = 1,6-dimethoxyphenazine + S-adenosyl-L-homocysteine + H(+). It catalyses the reaction 1-hydroxy-6-methoxyphenazine N(10)-oxide + S-adenosyl-L-methionine = 1,6-dimethoxyphenazine N(5)-oxide + S-adenosyl-L-homocysteine. The enzyme catalyses 1,6-dihydroxyphenazine N(5),N(10)-dioxide + S-adenosyl-L-methionine = 1-hydroxy-6-methoxyphenazine N(5),N(10)-dioxide + S-adenosyl-L-homocysteine. The catalysed reaction is 1-hydroxy-6-methoxyphenazine N(5),N(10)-dioxide + S-adenosyl-L-methionine = 1,6-dimethoxyphenazine N(5),N(10)-dioxide + S-adenosyl-L-homocysteine. Involved in the biosynthesis of phenazine natural products including myxin, an N(5),N(10)-dioxide phenazine antiobiotic, which has antimicrobial activity. O-methyltransferase, which converts iodinin (1,6-dihydroxyphenazine N(5),N(10)-dioxide) to myxin (1-hydroxy-6-methoxyphenazine N(5),N(10)-dioxide). Catalyzes both monomethoxy and dimethoxy formation of phenazine natural compounds. Acts on a wide variety of substrates, catalyzing O-methylation of phenazines with non-, mono- or di-N-oxide. Highest activity with 1,6-dihydroxyphenazine (DHP) as substrate. Less active with monohydroxy-containing and monohydroxy-monomethoxy-containing phenazines. Least active with non-phenazine substrates, such as 8-hydroxyquinoline and 6-hydroxyquinoline. Is not able to convert 1-hydroxyphenazine to 1-hydroxy-N5-methylphenazine (pyocyanine), hence does not function as an N-methyltransferase. This is Phenazine O-methyltransferase PhzM from Lysobacter antibioticus.